The primary structure comprises 302 residues: Putative S-adenosyl-L-methionine-dependent methyltransferase MAB_4586c (302 aa).

Residues D122 and 151-152 (DL) contribute to the S-adenosyl-L-methionine site.

It belongs to the UPF0677 family.

Exhibits S-adenosyl-L-methionine-dependent methyltransferase activity. This is Putative S-adenosyl-L-methionine-dependent methyltransferase MAB_4586c from Mycobacteroides abscessus (strain ATCC 19977 / DSM 44196 / CCUG 20993 / CIP 104536 / JCM 13569 / NCTC 13031 / TMC 1543 / L948) (Mycobacterium abscessus).